The chain runs to 342 residues: Phomopsin biosynthesis cluster protein B' (342 aa).

Positions 1–22 are disordered; the sequence is MESIAKAKSLPNKGRTYDSQRP. Residues 87–107 form a helical membrane-spanning segment; sequence VLIIGCAVISLFAIIGALGFA. A disordered region spans residues 118 to 186; it reads CASPAHQNPH…QCGESPDEAQ (69 aa). Residues 144-155 show a composition bias toward low complexity; sequence HSGSHSSSSSTN. The N-linked (GlcNAc...) asparagine glycan is linked to asparagine 248.

Its subcellular location is the membrane. Functionally, part of the gene cluster that mediates the biosynthesis of the phomopsins, a group of hexapeptide mycotoxins which infects lupins and causes lupinosis disease in livestock. The role of phomB' within the phomopsins biosynthesis pathway has still to be determined. The pathway starts with the processing of the precursor phomA by several endopeptidases including kexin proteases as well as the cluster-specific S41 family peptidase phomP1 and the oligopeptidase phomG to produce 10 identical copies of the hexapeptide Tyr-Val-Ile-Pro-Ile-Asp. After being excised from the precursor peptide, the core peptides are cyclized and modified post-translationally by enzymes encoded within the gene cluster. The timing and order of proteolysis of the phomA precursor and PTMs are still unknown. Two tyrosinase-like enzymes, phomQ1 and phomQ2, catalyze the chlorination and hydroxylation of Tyr, respectively. PhomYb, is proposed to be involved in the construction of the macrocyclic structure. The other 4 ustYa family proteins may be involved in PTMs that generate the unique structure of phomopsin A. PhomYa is required for the hydroxylation of C-beta of Tyr. PhomYc, phomYd, and phomYe are responsible for the biosynthesis of 2,3-dehydroisoleucine (dIle), 2,3-dehydroaspartic acid (dAsp), and 3,4-dehydroproline (dPro), respectively. While dIle formation by phomYc is indispensable for the installation of dAsp by phomYd, the order of the other PTMs have not been elucidated yet. Most of the biosynthetic enzymes likely have broad substrate specificity, and thus, there might be a metabolic grid from a precursor to phomopsin A. The enzyme(s) responsible for the biosynthesis of 3,4-dehydrovaline (dVal) have also not been identified yet. Finally, phomM acts as an S-adenosylmethionine-dependent alpha-N-methyltransferase that catalyzes two successive N-methylation reactions, converting N-desmethyl-phomopsin A to phomopsin A and phomopsin A further to an N,N-dimethylated congener called phomopsin E. In Diaporthe leptostromiformis (Lupinosis disease fungus), this protein is Phomopsin biosynthesis cluster protein B'.